The primary structure comprises 160 residues: Major pollen allergen Car b 1 isoforms 1A and 1B (160 aa).

It belongs to the BetVI family.

The protein is Major pollen allergen Car b 1 isoforms 1A and 1B of Carpinus betulus (European hornbeam).